The chain runs to 156 residues: Ribosomal RNA large subunit methyltransferase H (156 aa).

S-adenosyl-L-methionine contacts are provided by residues L74, G105, and 124-129; that span reads LSKLTL.

This sequence belongs to the RNA methyltransferase RlmH family. As to quaternary structure, homodimer.

Its subcellular location is the cytoplasm. The catalysed reaction is pseudouridine(1915) in 23S rRNA + S-adenosyl-L-methionine = N(3)-methylpseudouridine(1915) in 23S rRNA + S-adenosyl-L-homocysteine + H(+). In terms of biological role, specifically methylates the pseudouridine at position 1915 (m3Psi1915) in 23S rRNA. This is Ribosomal RNA large subunit methyltransferase H from Legionella pneumophila (strain Lens).